A 338-amino-acid polypeptide reads, in one-letter code: Ketol-acid reductoisomerase (NADP(+)) (338 aa).

The region spanning 1–181 (MKVFYDKDAD…GGGRAGIIET (181 aa)) is the KARI N-terminal Rossmann domain. NADP(+)-binding positions include 24 to 27 (YGSQ), Arg47, and Ser52. His107 is an active-site residue. Gly133 contributes to the NADP(+) binding site. One can recognise a KARI C-terminal knotted domain in the interval 182 to 327 (NFREETETDL…AKLRAMMPWI (146 aa)). Mg(2+) contacts are provided by Asp190, Glu194, Glu226, and Glu230. Ser251 contacts substrate.

This sequence belongs to the ketol-acid reductoisomerase family. Requires Mg(2+) as cofactor.

The catalysed reaction is (2R)-2,3-dihydroxy-3-methylbutanoate + NADP(+) = (2S)-2-acetolactate + NADPH + H(+). It catalyses the reaction (2R,3R)-2,3-dihydroxy-3-methylpentanoate + NADP(+) = (S)-2-ethyl-2-hydroxy-3-oxobutanoate + NADPH + H(+). The protein operates within amino-acid biosynthesis; L-isoleucine biosynthesis; L-isoleucine from 2-oxobutanoate: step 2/4. It participates in amino-acid biosynthesis; L-valine biosynthesis; L-valine from pyruvate: step 2/4. Its function is as follows. Involved in the biosynthesis of branched-chain amino acids (BCAA). Catalyzes an alkyl-migration followed by a ketol-acid reduction of (S)-2-acetolactate (S2AL) to yield (R)-2,3-dihydroxy-isovalerate. In the isomerase reaction, S2AL is rearranged via a Mg-dependent methyl migration to produce 3-hydroxy-3-methyl-2-ketobutyrate (HMKB). In the reductase reaction, this 2-ketoacid undergoes a metal-dependent reduction by NADPH to yield (R)-2,3-dihydroxy-isovalerate. This is Ketol-acid reductoisomerase (NADP(+)) from Polynucleobacter asymbioticus (strain DSM 18221 / CIP 109841 / QLW-P1DMWA-1) (Polynucleobacter necessarius subsp. asymbioticus).